The sequence spans 586 residues: Envelope glycoprotein (586 aa).

The first 22 residues, 1 to 22 (MNFNYHFIWSLVILSQISQVQA), serve as a signal peptide directing secretion. Topologically, residues 23 to 526 (GFGDPREALA…TSFHGFLPYV (504 aa)) are extracellular. N-linked (GlcNAc...) asparagine; by host glycosylation is found at Asn-120 and Asn-237. The short motif at 247-250 (CWLC) is the CXXC element. Cystine bridges form between Cys-247–Cys-250, Cys-247–Cys-483, and Cys-475–Cys-482. N-linked (GlcNAc...) asparagine; by host glycosylation is found at Asn-264, Asn-276, Asn-291, Asn-304, Asn-318, Asn-324, Asn-339, and Asn-357. Residues 398-418 (LIPLFVGLGITTAVSTGAAGL) are fusion peptide. Coiled-coil stretches lie at residues 419–469 (GVSI…LLTA) and 479–515 (QEKC…DNPF). The immunosuppression stretch occupies residues 458-474 (LQNRRGLDLLTAEQGGI). A CX6CC motif is present at residues 475–483 (CLALQEKCC). A glycan (N-linked (GlcNAc...) asparagine; by host) is linked at Asn-487. The helical transmembrane segment at 527–547 (MPLLGPLLCLLLVLSFGPIIF) threads the bilayer. Over 548–586 (NKLMTFIKHQIESIQAKPIQVHYHRLEQEDSGGSYLTLT) the chain is Cytoplasmic. The YXXL motif; contains endocytosis signal motif lies at 570-573 (YHRL).

As to quaternary structure, the mature envelope protein (Env) consists of a trimer of SU-TM heterodimers attached by a labile interchain disulfide bond. In terms of processing, specific enzymatic cleavages in vivo yield mature proteins. Envelope glycoproteins are synthesized as an inactive precursor that is N-glycosylated and processed likely by host cell furin or by a furin-like protease in the Golgi to yield the mature SU and TM proteins. The cleavage site between SU and TM requires the minimal sequence [KR]-X-[KR]-R. The R-peptide is released from the C-terminus of the cytoplasmic tail of the TM protein upon particle formation as a result of proteolytic cleavage by the viral protease. Cleavage of this peptide is required for TM to become fusogenic. The CXXC motif is highly conserved across a broad range of retroviral envelope proteins. It is thought to participate in the formation of a labile disulfide bond possibly with the CX6CC motif present in the transmembrane protein. Isomerization of the intersubunit disulfide bond to an SU intrachain disulfide bond is thought to occur upon receptor recognition in order to allow membrane fusion.

Its subcellular location is the virion membrane. It is found in the host cell membrane. The surface protein (SU) attaches the virus to the host cell by binding to its receptor. This interaction triggers the refolding of the transmembrane protein (TM) and is thought to activate its fusogenic potential by unmasking its fusion peptide. Fusion occurs at the host cell plasma membrane. Its function is as follows. The transmembrane protein (TM) acts as a class I viral fusion protein. Under the current model, the protein has at least 3 conformational states: pre-fusion native state, pre-hairpin intermediate state, and post-fusion hairpin state. During viral and target cell membrane fusion, the coiled coil regions (heptad repeats) assume a trimer-of-hairpins structure, positioning the fusion peptide in close proximity to the C-terminal region of the ectodomain. The formation of this structure appears to drive apposition and subsequent fusion of viral and target cell membranes. Membranes fusion leads to delivery of the nucleocapsid into the cytoplasm. This chain is Envelope glycoprotein (env), found in Mason-Pfizer monkey virus (MPMV).